The following is a 505-amino-acid chain: Retinoic acid receptor gamma (505 aa).

Disordered stretches follow at residues 1 to 57 (MMKF…SSKD) and 113 to 134 (SLSV…PSPP). Composition is skewed to basic and acidic residues over residues 12–22 (DGGERPEEEGK) and 32–46 (MGKE…KEEA). The segment at 52 to 142 (MSSSKDRICS…PPPPPRVYKP (91 aa)) is modulating. The segment covering 115-124 (SVETQSTSSE) has biased composition (polar residues). NR C4-type zinc fingers lie at residues 143-163 (CFVC…CEGC) and 179-203 (CHRD…LQKC). The segment at residues 143 to 208 (CFVCNDKSSG…RLQKCFEVGM (66 aa)) is a DNA-binding region (nuclear receptor). The tract at residues 209–237 (SKEAVRNDRNKKKKEIKEEVVTDSYEMPP) is hinge. In terms of domain architecture, NR LBD spans 238–472 (EMEALIQKVS…PLIREMLENP (235 aa)). Residues 462–505 (PPLIREMLENPEAFEDDASPPPKSEQKPIKVEEKPGEKTSTKDP) are disordered. Over residues 485 to 505 (SEQKPIKVEEKPGEKTSTKDP) the composition is skewed to basic and acidic residues.

Belongs to the nuclear hormone receptor family. NR1 subfamily. In terms of assembly, heterodimer; with a RXR molecule. Binds DNA preferentially as a RAR/RXR heterodimer. Isoform Delta-1A and Isoform Delta-1B are most abundant in regenerating limbs, tails, and the anterior half of the lower jaw. Isoform Delta-2 is broadly and uniformly distributed.

Its subcellular location is the nucleus. Its function is as follows. Receptor for retinoic acid. Retinoic acid receptors bind as heterodimers to their target response elements in response to their ligands, all-trans or 9-cis retinoic acid, and regulate gene expression in various biological processes. The RAR/RXR heterodimers bind to the retinoic acid response elements (RARE) composed of tandem 5'-AGGTCA-3' sites known as DR1-DR5. This Notophthalmus viridescens (Eastern newt) protein is Retinoic acid receptor gamma (RARG).